A 559-amino-acid polypeptide reads, in one-letter code: Glucose-6-phosphate isomerase 4 (559 aa).

E356 acts as the Proton donor in catalysis. Residues H387 and K513 contribute to the active site.

Belongs to the GPI family.

The protein resides in the cytoplasm. It carries out the reaction alpha-D-glucose 6-phosphate = beta-D-fructose 6-phosphate. It participates in carbohydrate biosynthesis; gluconeogenesis. Its pathway is carbohydrate degradation; glycolysis; D-glyceraldehyde 3-phosphate and glycerone phosphate from D-glucose: step 2/4. In terms of biological role, catalyzes the reversible isomerization of glucose-6-phosphate to fructose-6-phosphate. This is Glucose-6-phosphate isomerase 4 from Rhodococcus jostii (strain RHA1).